The following is a 252-amino-acid chain: Small ribosomal subunit protein uS2 (252 aa).

The protein belongs to the universal ribosomal protein uS2 family. In terms of assembly, component of the small ribosomal subunit. Mature ribosomes consist of a small (40S) and a large (60S) subunit. The 40S subunit contains about 33 different proteins and 1 molecule of RNA (18S). The 60S subunit contains about 49 different proteins and 3 molecules of RNA (25S, 5.8S and 5S). Interacts with RPS21.

It localises to the cytoplasm. In terms of biological role, required for the assembly and/or stability of the 40S ribosomal subunit. Required for the processing of the 20S rRNA-precursor to mature 18S rRNA in a late step of the maturation of 40S ribosomal subunits. The polypeptide is Small ribosomal subunit protein uS2 (Encephalitozoon cuniculi (strain GB-M1) (Microsporidian parasite)).